Here is a 362-residue protein sequence, read N- to C-terminus: Phosphoserine aminotransferase (362 aa).

Positions 9 and 42 each coordinate L-glutamate. Residues 76-77, W102, T153, D174, and Q197 each bind pyridoxal 5'-phosphate; that span reads GR. The residue at position 198 (K198) is an N6-(pyridoxal phosphate)lysine. 239–240 lines the pyridoxal 5'-phosphate pocket; the sequence is NT.

The protein belongs to the class-V pyridoxal-phosphate-dependent aminotransferase family. SerC subfamily. As to quaternary structure, homodimer. Requires pyridoxal 5'-phosphate as cofactor.

It is found in the cytoplasm. The catalysed reaction is O-phospho-L-serine + 2-oxoglutarate = 3-phosphooxypyruvate + L-glutamate. It catalyses the reaction 4-(phosphooxy)-L-threonine + 2-oxoglutarate = (R)-3-hydroxy-2-oxo-4-phosphooxybutanoate + L-glutamate. Its pathway is amino-acid biosynthesis; L-serine biosynthesis; L-serine from 3-phospho-D-glycerate: step 2/3. It participates in cofactor biosynthesis; pyridoxine 5'-phosphate biosynthesis; pyridoxine 5'-phosphate from D-erythrose 4-phosphate: step 3/5. Functionally, catalyzes the reversible conversion of 3-phosphohydroxypyruvate to phosphoserine and of 3-hydroxy-2-oxo-4-phosphonooxybutanoate to phosphohydroxythreonine. This Salmonella agona (strain SL483) protein is Phosphoserine aminotransferase.